A 476-amino-acid chain; its full sequence is MRGYEVIIGFETHAQLSTASKIFSRASTAFGAEPNTQACAVDLALPGTLPVMNKGAVERAIKLGLALGSHIAPRSVFARKNYFYPDLPKGYQISQYEIPVVQGGAVSFFLGEEKKTVRLVRAHLEEDAGKSLHENFIGQSGIDLNRAGTPLLEIVTEPDMRSTAEAVAYARELHKIVTWIGICDGNMQEGSFRCDANVSVRKPGEKLGTRREIKNLNSFKFMQQAIDYEINSQINELEDGRKIEQATVLFDPDTGETRTMRTKEDAADYRYFPDPDLPPLAIEAEWIERVRATMPELPRAMAERYVRDHGMSEYDAAQLTQSPALARYFDDAVKAGATPKLASNWITGEMARRLNAQEIGIEAAPVTAQQLAQLVGRIADGTLPNNAARQVFDALWTGEGSDVDAIIEARDLKPMSDTGALDRILDEVIAKNAKNVEEYRGGKEKALNGLVGQVMKASGGKANPAQVTELLKAKLG.

It belongs to the GatB/GatE family. GatB subfamily. Heterotrimer of A, B and C subunits.

It catalyses the reaction L-glutamyl-tRNA(Gln) + L-glutamine + ATP + H2O = L-glutaminyl-tRNA(Gln) + L-glutamate + ADP + phosphate + H(+). The catalysed reaction is L-aspartyl-tRNA(Asn) + L-glutamine + ATP + H2O = L-asparaginyl-tRNA(Asn) + L-glutamate + ADP + phosphate + 2 H(+). Allows the formation of correctly charged Asn-tRNA(Asn) or Gln-tRNA(Gln) through the transamidation of misacylated Asp-tRNA(Asn) or Glu-tRNA(Gln) in organisms which lack either or both of asparaginyl-tRNA or glutaminyl-tRNA synthetases. The reaction takes place in the presence of glutamine and ATP through an activated phospho-Asp-tRNA(Asn) or phospho-Glu-tRNA(Gln). The sequence is that of Aspartyl/glutamyl-tRNA(Asn/Gln) amidotransferase subunit B from Variovorax paradoxus (strain S110).